The primary structure comprises 947 residues: Bifunctional glutamine synthetase adenylyltransferase/adenylyl-removing enzyme (947 aa).

The interval 1 to 440 is adenylyl removase; that stretch reads MTPLSSPLSQ…VFNELIGDDE (440 aa). Residues 450–947 form an adenylyl transferase region; the sequence is SEPWREVWQD…ASWRKWLVAV (498 aa).

Belongs to the GlnE family. The cofactor is Mg(2+).

The enzyme catalyses [glutamine synthetase]-O(4)-(5'-adenylyl)-L-tyrosine + phosphate = [glutamine synthetase]-L-tyrosine + ADP. It catalyses the reaction [glutamine synthetase]-L-tyrosine + ATP = [glutamine synthetase]-O(4)-(5'-adenylyl)-L-tyrosine + diphosphate. Its function is as follows. Involved in the regulation of glutamine synthetase GlnA, a key enzyme in the process to assimilate ammonia. When cellular nitrogen levels are high, the C-terminal adenylyl transferase (AT) inactivates GlnA by covalent transfer of an adenylyl group from ATP to specific tyrosine residue of GlnA, thus reducing its activity. Conversely, when nitrogen levels are low, the N-terminal adenylyl removase (AR) activates GlnA by removing the adenylyl group by phosphorolysis, increasing its activity. The regulatory region of GlnE binds the signal transduction protein PII (GlnB) which indicates the nitrogen status of the cell. This Salmonella newport (strain SL254) protein is Bifunctional glutamine synthetase adenylyltransferase/adenylyl-removing enzyme.